The primary structure comprises 456 residues: MNTMTLLGKVFLLQFLIGVGFCMLMQDPKRNDTKGTYAACFRSQPQGNEPASPDCLKAFMAYAEDMKNIFHFTKEQINYLWSLERETQSLLHNHRRRKRQAVYLPVRKECRLLSELERQNLFYTVRSLKMDTSNPNEYDTLANLHRGAVQPHAHDGSNFLGWHRVYLMYYERALRRIRGDVTLCFWDTTMEFNLGMDNWEYTAVFSSDFFGNRRGQVITGPFRDWPLPPGLTESDYLYRNMTRGRGMPFDSRAASSIFYNPNTIIHSTITWEGFGFDTITNSQGQTRNITIEGEHNNVHNWVGGAMGFLDPAPQDPIFFFHHCYIDYVWERFREKMRRYFRDPTTDYPGHGNETLHDANYPMIGFEWYRNIDGYSDYFTQNVYRYESPTCQACYYSPYTVCGQGNQCIARMNYPGTEIEEGPQVPNGPVAAFSVAGGTMMMSASNGRGFIATSNSE.

Residues 1–22 (MNTMTLLGKVFLLQFLIGVGFC) form the signal peptide. 6 residues coordinate Cu cation: H145, H154, H163, H295, H299, and H322.

Belongs to the tyrosinase family. Cu(2+) is required as a cofactor. As to expression, prismatic layer of shell (at protein level).

The protein localises to the secreted. This Pinctada maxima (Silver-lipped pearl oyster) protein is Tyrosinase-like protein.